The chain runs to 423 residues: Osteomodulin (423 aa).

Positions 1–20 (MGFLSPIYVLFFCFGVRVYC) are cleaved as a signal peptide. Sulfotyrosine is present on residues tyrosine 22, tyrosine 25, tyrosine 31, tyrosine 39, tyrosine 51, and tyrosine 77. In terms of domain architecture, LRRNT spans 53 to 91 (VPFYNNILGCAKECFCPTNFPTSMYCDNRKLKTIPIIPM). LRR repeat units follow at residues 92–113 (HIQQ…SFIN), 116–129 (HLKE…KIKS), 142–164 (NLQQ…PKSL), 165–184 (ERLL…AMDG), 187–207 (NVTM…KEKT), 213–233 (KLMQ…GLPS), 234–255 (SLMY…YFDK), 258–279 (KLHA…IFNL), 281–294 (NLIE…KLKQ), 301–322 (NLEH…MICP), and 331–353 (HLTY…IFFC). 2 N-linked (GlcNAc...) asparagine glycosylation sites follow: asparagine 113 and asparagine 121. N-linked (GlcNAc...) asparagine glycosylation is present at asparagine 187. 2 N-linked (GlcNAc...) asparagine glycosylation sites follow: asparagine 242 and asparagine 278. N-linked (GlcNAc...) asparagine glycosylation occurs at asparagine 316. Cysteine 321 and cysteine 353 are joined by a disulfide. Residues 381–406 (RSYQEEEEEDDHDSQDNTLEGQEVSD) are disordered. Sulfotyrosine occurs at positions 413 and 414.

The protein belongs to the small leucine-rich proteoglycan (SLRP) family. SLRP class II subfamily. As to quaternary structure, binds the alpha(V)beta(3)-integrin. In terms of processing, glycosylated; contains keratan sulfate. In terms of tissue distribution, bone specific.

The protein resides in the secreted. The protein localises to the extracellular space. It localises to the extracellular matrix. Its function is as follows. May be implicated in biomineralization processes. Has a function in binding of osteoblasts via the alpha(V)beta(3)-integrin. This chain is Osteomodulin (Omd), found in Mus musculus (Mouse).